The chain runs to 85 residues: Small ribosomal subunit protein eS21 (85 aa).

This sequence belongs to the eukaryotic ribosomal protein eS21 family. As to quaternary structure, component of the 40S small ribosomal subunit.

Its subcellular location is the cytoplasm. It is found in the cytosol. The protein resides in the rough endoplasmic reticulum. The chain is Small ribosomal subunit protein eS21 (RPS21) from Branchiostoma belcheri (Amphioxus).